Reading from the N-terminus, the 447-residue chain is Glyceraldehyde-3-phosphate dehydrogenase GAPB, chloroplastic (447 aa).

Residues 1 to 80 (MATHAALAVS…STPVRGETVA (80 aa)) constitute a chloroplast transit peptide. NADP(+) is bound by residues 91 to 92 (RI), Asp-115, and Arg-160. D-glyceraldehyde 3-phosphate contacts are provided by residues 234–236 (SCT), Thr-265, Arg-280, 293–294 (TG), and Arg-316. The active-site Nucleophile is the Cys-235. Residue Asn-399 coordinates NADP(+).

Belongs to the glyceraldehyde-3-phosphate dehydrogenase family. In terms of assembly, tetramer of either four A chains (GAPDH 2) or two A and two B chains (GAPDH 1). Expressed in leaves and stems.

It is found in the plastid. The protein localises to the chloroplast membrane. It localises to the chloroplast stroma. The catalysed reaction is D-glyceraldehyde 3-phosphate + phosphate + NADP(+) = (2R)-3-phospho-glyceroyl phosphate + NADPH + H(+). It functions in the pathway carbohydrate biosynthesis; Calvin cycle. Involved in the photosynthetic reductive pentose phosphate pathway (Calvin-Benson cycle). Catalyzes the reduction of 1,3-diphosphoglycerate by NADPH. In Arabidopsis thaliana (Mouse-ear cress), this protein is Glyceraldehyde-3-phosphate dehydrogenase GAPB, chloroplastic (GAPB).